Consider the following 293-residue polypeptide: Ribulose bisphosphate carboxylase/oxygenase activase, chloroplastic (293 aa).

75–82 contributes to the ATP binding site; it reads PGTGKTTV.

This sequence belongs to the CbxX/CfxQ family. In terms of assembly, forms homooligomers. Forms heterohexameric rings with the nuclear-encoded Rca subunit consisting of 3 of each nuclear- and plastidial-encoded subunits that alternate in the ring.

It is found in the plastid. Its subcellular location is the chloroplast. Functionally, required for the expression of ribulose 1,5-bisphosphate carboxylase/oxygenase (RuBisCo). ATPase involved in the activation of red-type RuBisCo, which tends to form inactive complexes with its substrate ribulose 1,5-bisphosphate (RuBP). Catalyzes the release of RuBP from inhibited RuBisCo in an ATP-dependent manner. Activation of RuBisCO involves the ATP-dependent carboxylation of the epsilon-amino group of lysine leading to a carbamate structure. The nuclear-encoded subunit plays a more critical role in activase function than the plastidial-encoded subunit. In Cyanidioschyzon merolae (strain NIES-3377 / 10D) (Unicellular red alga), this protein is Ribulose bisphosphate carboxylase/oxygenase activase, chloroplastic.